The chain runs to 613 residues: Phosphomethylpyrimidine synthase (613 aa).

Residues Asn215, Met244, Tyr273, His309, 329–331 (SRG), 370–373 (DGLR), and Glu409 each bind substrate. His413 is a binding site for Zn(2+). Tyr436 lines the substrate pocket. His477 lines the Zn(2+) pocket. 3 residues coordinate [4Fe-4S] cluster: Cys557, Cys560, and Cys565.

Belongs to the ThiC family. As to quaternary structure, homodimer. The cofactor is [4Fe-4S] cluster.

It catalyses the reaction 5-amino-1-(5-phospho-beta-D-ribosyl)imidazole + S-adenosyl-L-methionine = 4-amino-2-methyl-5-(phosphooxymethyl)pyrimidine + CO + 5'-deoxyadenosine + formate + L-methionine + 3 H(+). The protein operates within cofactor biosynthesis; thiamine diphosphate biosynthesis. Its function is as follows. Catalyzes the synthesis of the hydroxymethylpyrimidine phosphate (HMP-P) moiety of thiamine from aminoimidazole ribotide (AIR) in a radical S-adenosyl-L-methionine (SAM)-dependent reaction. The protein is Phosphomethylpyrimidine synthase of Paramagnetospirillum magneticum (strain ATCC 700264 / AMB-1) (Magnetospirillum magneticum).